We begin with the raw amino-acid sequence, 445 residues long: 3-phosphoshikimate 1-carboxyvinyltransferase (445 aa).

3-phosphoshikimate contacts are provided by Lys-28, Ser-29, and Arg-33. A phosphoenolpyruvate-binding site is contributed by Lys-28. Phosphoenolpyruvate is bound by residues Gly-101 and Arg-129. 3-phosphoshikimate-binding residues include Ser-175, Gln-177, Asp-328, and Lys-355. Gln-177 serves as a coordination point for phosphoenolpyruvate. The active-site Proton acceptor is the Asp-328. Phosphoenolpyruvate-binding residues include Arg-359 and Arg-402.

The protein belongs to the EPSP synthase family. Monomer.

It localises to the cytoplasm. The catalysed reaction is 3-phosphoshikimate + phosphoenolpyruvate = 5-O-(1-carboxyvinyl)-3-phosphoshikimate + phosphate. The protein operates within metabolic intermediate biosynthesis; chorismate biosynthesis; chorismate from D-erythrose 4-phosphate and phosphoenolpyruvate: step 6/7. Functionally, catalyzes the transfer of the enolpyruvyl moiety of phosphoenolpyruvate (PEP) to the 5-hydroxyl of shikimate-3-phosphate (S3P) to produce enolpyruvyl shikimate-3-phosphate and inorganic phosphate. The sequence is that of 3-phosphoshikimate 1-carboxyvinyltransferase from Bradyrhizobium sp. (strain BTAi1 / ATCC BAA-1182).